Reading from the N-terminus, the 113-residue chain is Protein Asterix (113 aa).

Residues 81 to 97 traverse the membrane as a helical segment; the sequence is IVSSFMLSVSAVVMSYL.

It belongs to the Asterix family.

The protein resides in the membrane. The chain is Protein Asterix from Caenorhabditis elegans.